The primary structure comprises 502 residues: ATP synthase subunit alpha (502 aa).

Position 169–176 (glycine 169–threonine 176) interacts with ATP.

Belongs to the ATPase alpha/beta chains family. In terms of assembly, F-type ATPases have 2 components, CF(1) - the catalytic core - and CF(0) - the membrane proton channel. CF(1) has five subunits: alpha(3), beta(3), gamma(1), delta(1), epsilon(1). CF(0) has three main subunits: a(1), b(2) and c(9-12). The alpha and beta chains form an alternating ring which encloses part of the gamma chain. CF(1) is attached to CF(0) by a central stalk formed by the gamma and epsilon chains, while a peripheral stalk is formed by the delta and b chains.

It localises to the cell membrane. The catalysed reaction is ATP + H2O + 4 H(+)(in) = ADP + phosphate + 5 H(+)(out). Its function is as follows. Produces ATP from ADP in the presence of a proton gradient across the membrane. The alpha chain is a regulatory subunit. The protein is ATP synthase subunit alpha of Staphylococcus aureus (strain Mu3 / ATCC 700698).